The following is a 107-amino-acid chain: Anti-adapter protein IraM (107 aa).

This sequence belongs to the IraM/RssC family.

The protein localises to the cytoplasm. In terms of biological role, inhibits RpoS proteolysis by regulating RssB activity, thereby increasing the stability of the sigma stress factor RpoS during magnesium starvation. The chain is Anti-adapter protein IraM from Escherichia coli O17:K52:H18 (strain UMN026 / ExPEC).